The chain runs to 218 residues: Ribose-5-phosphate isomerase A (218 aa).

Substrate is bound by residues 28–31 (TGST), 81–84 (DGAD), and 94–97 (KGGG). E103 acts as the Proton acceptor in catalysis. K121 serves as a coordination point for substrate.

Belongs to the ribose 5-phosphate isomerase family. Homodimer.

The enzyme catalyses aldehydo-D-ribose 5-phosphate = D-ribulose 5-phosphate. The protein operates within carbohydrate degradation; pentose phosphate pathway; D-ribose 5-phosphate from D-ribulose 5-phosphate (non-oxidative stage): step 1/1. In terms of biological role, catalyzes the reversible conversion of ribose-5-phosphate to ribulose 5-phosphate. This Vibrio atlanticus (strain LGP32) (Vibrio splendidus (strain Mel32)) protein is Ribose-5-phosphate isomerase A.